The following is a 311-amino-acid chain: MPLRLIFMGTPDFAVPTLLELAGHGHEIVAVYTRAPKPGGRRGLALVPTPIESEARRLGIPVLTPKTLKTEEALAEFRAHEADAAVVVAYGMILPQAILDAPKLGCYNLHASLLPRWRGAAPINRAIMAGDAESGVMVMKMDVGLDTGDVAMAELLAITDAMTASDLHDKLSRIGADLMVRAMAALERGGLTLTKQAEDGVTYAAKIEKAEARIDWTKPAHAVLRHIHGLSPFPGAWSEITIDGEAVRLKILRCALARGTGEPGTVVDDELTIACADSAIRITELQRAGKSPMKAADFLRGTRVAPGLRFG.

112 to 115 (SLLP) contacts (6S)-5,6,7,8-tetrahydrofolate.

Belongs to the Fmt family.

The enzyme catalyses L-methionyl-tRNA(fMet) + (6R)-10-formyltetrahydrofolate = N-formyl-L-methionyl-tRNA(fMet) + (6S)-5,6,7,8-tetrahydrofolate + H(+). Attaches a formyl group to the free amino group of methionyl-tRNA(fMet). The formyl group appears to play a dual role in the initiator identity of N-formylmethionyl-tRNA by promoting its recognition by IF2 and preventing the misappropriation of this tRNA by the elongation apparatus. This Bradyrhizobium sp. (strain ORS 278) protein is Methionyl-tRNA formyltransferase.